The chain runs to 221 residues: uncharacterized protein (221 aa).

Positions Met-1–Val-18 are cleaved as a signal peptide.

This is an uncharacterized protein from Aquifex aeolicus (strain VF5).